Reading from the N-terminus, the 382-residue chain is Protein RecA (382 aa).

Position 79 to 86 (79 to 86) interacts with ATP; sequence GPESSGKT. The segment at 362–382 is disordered; the sequence is ATKSAAKGSEVQADVKTKGAA.

It belongs to the RecA family.

The protein resides in the cytoplasm. Functionally, can catalyze the hydrolysis of ATP in the presence of single-stranded DNA, the ATP-dependent uptake of single-stranded DNA by duplex DNA, and the ATP-dependent hybridization of homologous single-stranded DNAs. It interacts with LexA causing its activation and leading to its autocatalytic cleavage. This chain is Protein RecA, found in Synechococcus sp. (strain WH7803).